The primary structure comprises 125 residues: Ribonuclease P protein component (125 aa).

This sequence belongs to the RnpA family. As to quaternary structure, consists of a catalytic RNA component (M1 or rnpB) and a protein subunit.

The enzyme catalyses Endonucleolytic cleavage of RNA, removing 5'-extranucleotides from tRNA precursor.. RNaseP catalyzes the removal of the 5'-leader sequence from pre-tRNA to produce the mature 5'-terminus. It can also cleave other RNA substrates such as 4.5S RNA. The protein component plays an auxiliary but essential role in vivo by binding to the 5'-leader sequence and broadening the substrate specificity of the ribozyme. This chain is Ribonuclease P protein component, found in Ruegeria pomeroyi (strain ATCC 700808 / DSM 15171 / DSS-3) (Silicibacter pomeroyi).